The following is a 177-amino-acid chain: Large ribosomal subunit protein uL6 (177 aa).

The protein belongs to the universal ribosomal protein uL6 family. As to quaternary structure, part of the 50S ribosomal subunit.

This protein binds to the 23S rRNA, and is important in its secondary structure. It is located near the subunit interface in the base of the L7/L12 stalk, and near the tRNA binding site of the peptidyltransferase center. In Glaesserella parasuis serovar 5 (strain SH0165) (Haemophilus parasuis), this protein is Large ribosomal subunit protein uL6.